The sequence spans 311 residues: Homoserine kinase (311 aa).

Residue 89 to 99 (PFARGLGSSAT) coordinates ATP.

Belongs to the GHMP kinase family. Homoserine kinase subfamily.

The protein localises to the cytoplasm. The catalysed reaction is L-homoserine + ATP = O-phospho-L-homoserine + ADP + H(+). The protein operates within amino-acid biosynthesis; L-threonine biosynthesis; L-threonine from L-aspartate: step 4/5. Its function is as follows. Catalyzes the ATP-dependent phosphorylation of L-homoserine to L-homoserine phosphate. This chain is Homoserine kinase, found in Halothermothrix orenii (strain H 168 / OCM 544 / DSM 9562).